A 611-amino-acid chain; its full sequence is Rho-related BTB domain-containing protein 3 (611 aa).

A rho-like region spans residues 1 to 175 (MSIHIVALGN…KELGATYLEL (175 aa)). BTB domains follow at residues 254 to 356 (VDVV…QWEE) and 420 to 487 (ADVV…CPAG). An interaction with Rab9 region spans residues 420–611 (ADVVFEIQGT…HSRKCRCLVM (192 aa)).

In terms of assembly, interacts with RAB9A and RAB9B (at lower level compared to RAB9A-binding). Interacts with M6PRBP1/TIP47. Ubiquitous. Highly expressed in neural and cardiac tissues, pancreas, placenta and testis.

It is found in the golgi apparatus. Functionally, rab9-regulated ATPase required for endosome to Golgi transport. Involved in transport vesicle docking at the Golgi complex, possibly by participating in release M6PRBP1/TIP47 from vesicles to permit their efficient docking and fusion at the Golgi. Specifically binds Rab9, but not other Rab proteins. Has low intrinsic ATPase activity due to autoinhibition, which is relieved by Rab9. This is Rho-related BTB domain-containing protein 3 (RHOBTB3) from Homo sapiens (Human).